We begin with the raw amino-acid sequence, 91 residues long: Small ribosomal subunit protein uS17 (91 aa).

This sequence belongs to the universal ribosomal protein uS17 family. Part of the 30S ribosomal subunit.

Its function is as follows. One of the primary rRNA binding proteins, it binds specifically to the 5'-end of 16S ribosomal RNA. The polypeptide is Small ribosomal subunit protein uS17 (Saccharopolyspora erythraea (strain ATCC 11635 / DSM 40517 / JCM 4748 / NBRC 13426 / NCIMB 8594 / NRRL 2338)).